The sequence spans 286 residues: NAD kinase (286 aa).

The Proton acceptor role is filled by aspartate 68. Residues aspartate 68–glycine 69, lysine 73, asparagine 142–aspartate 143, arginine 153, aspartate 172, threonine 183–serine 188, and glutamine 242 each bind NAD(+).

This sequence belongs to the NAD kinase family. It depends on a divalent metal cation as a cofactor.

Its subcellular location is the cytoplasm. It carries out the reaction NAD(+) + ATP = ADP + NADP(+) + H(+). Involved in the regulation of the intracellular balance of NAD and NADP, and is a key enzyme in the biosynthesis of NADP. Catalyzes specifically the phosphorylation on 2'-hydroxyl of the adenosine moiety of NAD to yield NADP. The polypeptide is NAD kinase (Natranaerobius thermophilus (strain ATCC BAA-1301 / DSM 18059 / JW/NM-WN-LF)).